The chain runs to 139 residues: D-ribose pyranase (139 aa).

His20 serves as the catalytic Proton donor. Residues Asp28, His106, and 128-130 (FAN) contribute to the substrate site.

It belongs to the RbsD / FucU family. RbsD subfamily. As to quaternary structure, homodecamer.

Its subcellular location is the cytoplasm. It catalyses the reaction beta-D-ribopyranose = beta-D-ribofuranose. It functions in the pathway carbohydrate metabolism; D-ribose degradation; D-ribose 5-phosphate from beta-D-ribopyranose: step 1/2. In terms of biological role, catalyzes the interconversion of beta-pyran and beta-furan forms of D-ribose. The polypeptide is D-ribose pyranase (Klebsiella pneumoniae (strain 342)).